The chain runs to 123 residues: MPTINQLIARPRVVQKSRKKVPALQQSPQKRGVCTRVYTTTPKKPNSALRKVAKVRLTNGFEVIGYIPGEGHNLQEHSVVMIRGGRVKDLPGVRYHILRGVLDTQGVKNRKQRRSKYGAKRPK.

Position 89 is a 3-methylthioaspartic acid (D89).

It belongs to the universal ribosomal protein uS12 family. Part of the 30S ribosomal subunit. Contacts proteins S8 and S17. May interact with IF1 in the 30S initiation complex.

Its function is as follows. With S4 and S5 plays an important role in translational accuracy. Interacts with and stabilizes bases of the 16S rRNA that are involved in tRNA selection in the A site and with the mRNA backbone. Located at the interface of the 30S and 50S subunits, it traverses the body of the 30S subunit contacting proteins on the other side and probably holding the rRNA structure together. The combined cluster of proteins S8, S12 and S17 appears to hold together the shoulder and platform of the 30S subunit. The polypeptide is Small ribosomal subunit protein uS12 (Rhodopseudomonas palustris (strain HaA2)).